We begin with the raw amino-acid sequence, 202 residues long: Small ribosomal subunit protein uS4 (202 aa).

The span at Met-1–Arg-13 shows a compositional bias: basic residues. Positions Met-1–Arg-42 are disordered. In terms of domain architecture, S4 RNA-binding spans Asn-90–Asn-152.

Belongs to the universal ribosomal protein uS4 family. In terms of assembly, part of the 30S ribosomal subunit. Contacts protein S5. The interaction surface between S4 and S5 is involved in control of translational fidelity.

Its function is as follows. One of the primary rRNA binding proteins, it binds directly to 16S rRNA where it nucleates assembly of the body of the 30S subunit. With S5 and S12 plays an important role in translational accuracy. The polypeptide is Small ribosomal subunit protein uS4 (Prochlorococcus marinus (strain AS9601)).